The sequence spans 129 residues: D-ribose pyranase (129 aa).

Residue His-20 is the Proton donor of the active site. Substrate is bound by residues Asp-28, His-96, and 118–120 (YAN).

This sequence belongs to the RbsD / FucU family. RbsD subfamily. Homodecamer.

It is found in the cytoplasm. It carries out the reaction beta-D-ribopyranose = beta-D-ribofuranose. The protein operates within carbohydrate metabolism; D-ribose degradation; D-ribose 5-phosphate from beta-D-ribopyranose: step 1/2. Functionally, catalyzes the interconversion of beta-pyran and beta-furan forms of D-ribose. This Exiguobacterium sp. (strain ATCC BAA-1283 / AT1b) protein is D-ribose pyranase.